Reading from the N-terminus, the 100-residue chain is Small ribosomal subunit protein bS20 (100 aa).

Belongs to the bacterial ribosomal protein bS20 family.

Functionally, binds directly to 16S ribosomal RNA. This chain is Small ribosomal subunit protein bS20, found in Synechococcus sp. (strain JA-3-3Ab) (Cyanobacteria bacterium Yellowstone A-Prime).